Here is a 342-residue protein sequence, read N- to C-terminus: MAHIVTLNTPLREDWLAQLADVVTNPDELLHLLQIEADENLRAGQDARRLFALRVPRAFIARMEKGNPDDPLLRQVLTSRDEFIVAPGFSTDPLEEQHSVVPGLLHKYQNRALLLVKGGCAVNCRYCFRRHFPYAENQGNKRNWTVALEYIAAHPELDEIIFSGGDPLMAKDHELDWLLTQLEAIKHVKRLRIHSRLPIVIPARITDELVARFDQSRLQILLVNHINHANEVDEAFGLAMKKLRHVGVTLLNQSVLLRGVNDNARTLANLSNALFDAGVMPYYLHVLDKVQGAAHFMVTDDEARQIMRELLTLVSGYMVPRLAREIGGEPSKTPLDLQLRQC.

One can recognise a Radical SAM core domain in the interval 106–329 (HKYQNRALLL…PRLAREIGGE (224 aa)). 3 residues coordinate [4Fe-4S] cluster: cysteine 120, cysteine 124, and cysteine 127. Lysine 332 is subject to N6-(pyridoxal phosphate)lysine.

This sequence belongs to the radical SAM superfamily. KamA family. The cofactor is [4Fe-4S] cluster. Pyridoxal 5'-phosphate is required as a cofactor.

It catalyses the reaction L-lysine = D-beta-lysine. In terms of biological role, with EpmA is involved in the beta-lysylation step of the post-translational modification of translation elongation factor P (EF-P) on 'Lys-34'. EpmB appears to act before EpmA. Displays lysine 2,3-aminomutase activity, producing (R)-beta-lysine from (S)-alpha-lysine (L-lysine). The protein is L-lysine 2,3-aminomutase (epmB) of Salmonella typhimurium (strain LT2 / SGSC1412 / ATCC 700720).